A 372-amino-acid polypeptide reads, in one-letter code: Alanine dehydrogenase 1 (372 aa).

His94 is a catalytic residue. 170-200 is a binding site for NAD(+); the sequence is TYVIFGGGVAATNAANVALGLNAKVIIIELN.

Belongs to the AlaDH/PNT family.

It carries out the reaction L-alanine + NAD(+) + H2O = pyruvate + NH4(+) + NADH + H(+). It functions in the pathway amino-acid degradation; L-alanine degradation via dehydrogenase pathway; NH(3) and pyruvate from L-alanine: step 1/1. In terms of biological role, may play a role in cell wall synthesis as L-alanine is an important constituent of the peptidoglycan layer. The polypeptide is Alanine dehydrogenase 1 (ald1) (Staphylococcus aureus (strain MSSA476)).